The primary structure comprises 202 residues: FMN reductase (NADH) RutF 1 (202 aa).

The tract at residues 168-202 is disordered; it reads PRTPRSGSAPAEPARAPRAVGARPAEGPALALRSA. Residues 171–196 are compositionally biased toward low complexity; that stretch reads PRSGSAPAEPARAPRAVGARPAEGPA.

This sequence belongs to the non-flavoprotein flavin reductase family. RutF subfamily.

It carries out the reaction FMNH2 + NAD(+) = FMN + NADH + 2 H(+). Its function is as follows. Catalyzes the reduction of FMN to FMNH2 which is used to reduce pyrimidine by RutA via the Rut pathway. The polypeptide is FMN reductase (NADH) RutF 1 (Methylorubrum extorquens (strain PA1) (Methylobacterium extorquens)).